We begin with the raw amino-acid sequence, 223 residues long: ATP phosphoribosyltransferase (223 aa).

It belongs to the ATP phosphoribosyltransferase family. Short subfamily. In terms of assembly, heteromultimer composed of HisG and HisZ subunits.

The protein localises to the cytoplasm. The catalysed reaction is 1-(5-phospho-beta-D-ribosyl)-ATP + diphosphate = 5-phospho-alpha-D-ribose 1-diphosphate + ATP. It participates in amino-acid biosynthesis; L-histidine biosynthesis; L-histidine from 5-phospho-alpha-D-ribose 1-diphosphate: step 1/9. Functionally, catalyzes the condensation of ATP and 5-phosphoribose 1-diphosphate to form N'-(5'-phosphoribosyl)-ATP (PR-ATP). Has a crucial role in the pathway because the rate of histidine biosynthesis seems to be controlled primarily by regulation of HisG enzymatic activity. The sequence is that of ATP phosphoribosyltransferase from Bordetella pertussis (strain Tohama I / ATCC BAA-589 / NCTC 13251).